The sequence spans 582 residues: Actin-histidine N-methyltransferase (582 aa).

Residues R75, 104 to 106 (EGF), R254, 275 to 279 (DMCNH), and 325 to 327 (NGF) each bind S-adenosyl-L-methionine. The SET domain maps to 94 to 314 (DGFELVEFPE…SGEQIYIFYG (221 aa)). The interval 550 to 582 (DKDLLPNGTKSENDSFLAEDNQQETGNAKDFCS) is disordered.

It belongs to the class V-like SAM-binding methyltransferase superfamily. SETD3 actin-histidine methyltransferase family.

It is found in the cytoplasm. The enzyme catalyses L-histidyl-[protein] + S-adenosyl-L-methionine = N(tele)-methyl-L-histidyl-[protein] + S-adenosyl-L-homocysteine + H(+). Protein-histidine N-methyltransferase that specifically mediates 3-methylhistidine (tele-methylhistidine) methylation of actin at 'His-73'. Does not have protein-lysine N-methyltransferase activity and probably only catalyzes histidine methylation of actin. This Xenopus tropicalis (Western clawed frog) protein is Actin-histidine N-methyltransferase.